The sequence spans 654 residues: Protein THALLO (654 aa).

The span at 1–16 (MGKKGGTLKRSSKSTK) shows a compositional bias: basic residues. 3 disordered regions span residues 1 to 23 (MGKKGGTLKRSSKSTKTRKDIVE), 35 to 145 (KQRD…SDDE), and 164 to 212 (SITA…KDTH). A Nuclear localization signal 1 motif is present at residues 2 to 9 (GKKGGTLK). Composition is skewed to acidic residues over residues 44 to 56 (VNDDTDESDEDDV), 64 to 82 (GVDDESEEDEDTEDEEEAE), and 103 to 114 (GDDEMADDDKDK). Residues 140-160 (LSSDDEDIKAEEEEVIRLRAE) are a coiled coil. Over residues 171–181 (GLDDDSEEDSD) the composition is skewed to acidic residues. Basic and acidic residues predominate over residues 182–212 (RELTMEEISDKGKQATKSITDKKEKGDKDTH). Residues 243–263 (LSELNDAVEELESKINPVMNK) are a coiled coil. Disordered regions lie at residues 362–397 (SDSVDRITQDTAKPMKIDNAREEKKKKGEKRKHQND), 470–492 (VSTKRKPKTISGDDDLPQRDDIG), and 509–654 (KSSE…SIRM). The segment covering 364–387 (SVDRITQDTAKPMKIDNAREEKKK) has biased composition (basic and acidic residues). A compositionally biased stretch (acidic residues) spans 524–546 (SDDEDDNDGDNNDMVDNDGESED). A compositionally biased stretch (basic residues) spans 552 to 561 (VKQKQQAKRA). Over residues 588-599 (SNQMVSNRGLTR) the composition is skewed to polar residues. The Nuclear localization signal 2 motif lies at 608–615 (PRKKYRKN). Residues 645-654 (NPNTSRSIRM) are compositionally biased toward polar residues.

This sequence belongs to the SAS10 family. In terms of assembly, interacts with NUCL1, NUCL2, JMJ14, NOF1 and MPP10 in the nucleus. In terms of tissue distribution, mainly present in tissues undergoing rapid cellular growth and differentiation. Mostly expressed in shoots and flowers, and, to a lower extent, in leaves, siliques, roots and seedlings.

The protein resides in the nucleus. Its subcellular location is the nucleolus. Essential protein during embryogenesis. Involved both in gene transcription regulation and in processing events critical for proper rRNA biogenesis and nucleolar organization during reproduction; contributes to pre-rRNA processing at the 5' external transcribed spacer. Binds RNA. This Arabidopsis thaliana (Mouse-ear cress) protein is Protein THALLO.